A 69-amino-acid chain; its full sequence is uncharacterized protein (69 aa).

The Cytoplasmic portion of the chain corresponds to 1–15; that stretch reads MLLYIVIIVACIISK. A helical membrane pass occupies residues 16 to 36; that stretch reads LVPNEYWAIHLFFIIMIFMVY. The Extracellular segment spans residues 37 to 69; that stretch reads MYEKLDIHQKYQFWNYTMSGLSGHNVQITCKCY. Asn51 carries an N-linked (GlcNAc...) asparagine; by host glycan.

Belongs to the asfivirus X69R family.

The protein resides in the host membrane. This is an uncharacterized protein from Ornithodoros (relapsing fever ticks).